We begin with the raw amino-acid sequence, 257 residues long: NAD-capped RNA hydrolase NudC (257 aa).

Positions 25 and 69 each coordinate substrate. Positions 98 and 101 each coordinate Zn(2+). Glu111 provides a ligand contact to substrate. Zn(2+) is bound by residues Cys116 and Cys119. Position 124 (Tyr124) interacts with substrate. A Nudix hydrolase domain is found at 125-248 (PQIAPCIIVA…TVARRLIEDT (124 aa)). The a divalent metal cation site is built by Ala158, Glu174, and Glu178. The Nudix box motif lies at 159 to 180 (GFVEVGETLEQAVAREVMEESG). 192 to 199 (QPWPFPQS) is a substrate binding site. Glu219 provides a ligand contact to a divalent metal cation. Ala241 is a substrate binding site.

The protein belongs to the Nudix hydrolase family. NudC subfamily. Homodimer. Mg(2+) is required as a cofactor. The cofactor is Mn(2+). It depends on Zn(2+) as a cofactor.

It carries out the reaction a 5'-end NAD(+)-phospho-ribonucleoside in mRNA + H2O = a 5'-end phospho-adenosine-phospho-ribonucleoside in mRNA + beta-nicotinamide D-ribonucleotide + 2 H(+). The catalysed reaction is NAD(+) + H2O = beta-nicotinamide D-ribonucleotide + AMP + 2 H(+). It catalyses the reaction NADH + H2O = reduced beta-nicotinamide D-ribonucleotide + AMP + 2 H(+). Functionally, mRNA decapping enzyme that specifically removes the nicotinamide adenine dinucleotide (NAD) cap from a subset of mRNAs by hydrolyzing the diphosphate linkage to produce nicotinamide mononucleotide (NMN) and 5' monophosphate mRNA. The NAD-cap is present at the 5'-end of some mRNAs and stabilizes RNA against 5'-processing. Has preference for mRNAs with a 5'-end purine. Catalyzes the hydrolysis of a broad range of dinucleotide pyrophosphates. The polypeptide is NAD-capped RNA hydrolase NudC (Shigella flexneri).